The sequence spans 426 residues: Flotillin-1 (426 aa).

Belongs to the band 7/mec-2 family. Flotillin subfamily. As to quaternary structure, heterooligomeric complex of flotillins 1 and 2 and caveolins 1 and 2. As to expression, expressed in brain and ventral nerve cord from stage 12-16 of embryogenesis.

Its subcellular location is the cell membrane. The protein localises to the membrane. It localises to the caveola. May act as a scaffolding protein within caveolar membranes, functionally participating in formation of caveolae or caveolae-like vesicles. This Drosophila melanogaster (Fruit fly) protein is Flotillin-1.